The primary structure comprises 107 residues: UPF0213 protein SG0387 (107 aa).

The 76-residue stretch at 4 to 79 (SLWHLYLIRT…KQLSRAQKEH (76 aa)) folds into the GIY-YIG domain.

The protein belongs to the UPF0213 family.

In Sodalis glossinidius (strain morsitans), this protein is UPF0213 protein SG0387.